Consider the following 442-residue polypeptide: 5'-deoxyadenosine deaminase (442 aa).

Zn(2+) contacts are provided by His-72 and His-74. The substrate site is built by Glu-101 and His-193. His-220 provides a ligand contact to Zn(2+). 2 residues coordinate substrate: Glu-223 and Asp-309. Position 309 (Asp-309) interacts with Zn(2+).

This sequence belongs to the metallo-dependent hydrolases superfamily. MTA/SAH deaminase family. As to quaternary structure, homotetramer. Zn(2+) is required as a cofactor.

It carries out the reaction 5'-deoxyadenosine + H2O + H(+) = 5'-deoxyinosine + NH4(+). It catalyses the reaction S-adenosyl-L-homocysteine + H2O + H(+) = S-inosyl-L-homocysteine + NH4(+). The catalysed reaction is S-methyl-5'-thioadenosine + H2O + H(+) = S-methyl-5'-thioinosine + NH4(+). The enzyme catalyses adenosine + H2O + H(+) = inosine + NH4(+). It participates in amino-acid biosynthesis; S-adenosyl-L-methionine biosynthesis. Functionally, catalyzes the deamination of three SAM-derived enzymatic products, namely 5'-deoxyadenosine, S-adenosyl-L-homocysteine, and 5'-methylthioadenosine, to produce the inosine analogs. Can also deaminate adenosine. The preferred substrate for this enzyme is 5'-deoxyadenosine, but all these substrates are efficiently deaminated. Likely functions in a S-adenosyl-L-methionine (SAM) recycling pathway from S-adenosyl-L-homocysteine (SAH) produced from SAM-dependent methylation reactions. May also be involved in the recycling of 5'-deoxyadenosine, whereupon the 5'-deoxyribose moiety of 5'-deoxyinosine is further metabolized to deoxyhexoses used for the biosynthesis of aromatic amino acids in methanogens. In Methanoregula boonei (strain DSM 21154 / JCM 14090 / 6A8), this protein is 5'-deoxyadenosine deaminase.